We begin with the raw amino-acid sequence, 242 residues long: 1-(5-phosphoribosyl)-5-[(5-phosphoribosylamino)methylideneamino] imidazole-4-carboxamide isomerase (242 aa).

Aspartate 8 serves as the catalytic Proton acceptor. Residue aspartate 129 is the Proton donor of the active site.

This sequence belongs to the HisA/HisF family.

It is found in the cytoplasm. It catalyses the reaction 1-(5-phospho-beta-D-ribosyl)-5-[(5-phospho-beta-D-ribosylamino)methylideneamino]imidazole-4-carboxamide = 5-[(5-phospho-1-deoxy-D-ribulos-1-ylimino)methylamino]-1-(5-phospho-beta-D-ribosyl)imidazole-4-carboxamide. Its pathway is amino-acid biosynthesis; L-histidine biosynthesis; L-histidine from 5-phospho-alpha-D-ribose 1-diphosphate: step 4/9. The polypeptide is 1-(5-phosphoribosyl)-5-[(5-phosphoribosylamino)methylideneamino] imidazole-4-carboxamide isomerase (Dictyoglomus thermophilum (strain ATCC 35947 / DSM 3960 / H-6-12)).